A 668-amino-acid polypeptide reads, in one-letter code: Spartin (668 aa).

Met-1 carries the post-translational modification N-acetylmethionine. The region spanning Ile-16–Ile-94 is the MIT domain. The interval Val-110–Pro-176 is disordered. Residues Pro-118–Pro-127 show a composition bias toward basic and acidic residues. Residue Ser-126 is modified to Phosphoserine. Over residues Glu-128–Pro-162 the composition is skewed to low complexity. The interval Glu-190–Arg-380 is ubiquitin-binding region (UBR) domain. The LC3-interacting region (LIR); mediates interaction with MAP1LC3A AND MAP1LC3C signature appears at Glu-193–Asn-200. Residues Phe-348 to Glu-396 are disordered. Lys-362 is covalently cross-linked (Glycyl lysine isopeptide (Lys-Gly) (interchain with G-Cter in ubiquitin)). In terms of domain architecture, Senescence spans Ile-427–Ala-611. A required for localization to lipid droplets region spans residues Ala-431 to Asn-503. Ser-470 bears the Phosphoserine mark. The segment at Ile-631–Lys-668 is disordered. Over residues Lys-648–Lys-668 the composition is skewed to basic and acidic residues.

As to quaternary structure, interacts with ITCH and WWP1. Interacts (via MIT domain) with IST1; leading to the recruitment of SPART to midbodies. Interacts with MAP1LC3A and MAP1LC3C. In terms of processing, ubiquitinated; ubiquitination does not require ITCH and WWP1.

It localises to the cytoplasm. Its subcellular location is the midbody. The protein resides in the lipid droplet. Its function is as follows. Lipophagy receptor that plays an important role in lipid droplet (LD) turnover in motor neurons. Localizes to LDs and interacts with components of the autophagy machinery, such as MAP1LC3A/C proteins to deliver LDs to autophagosomes for degradation via lipophagy. Lipid transfer protein required for lipid droplet degradation, including by lipophagy. Can bind and transfer all lipid species found in lipid droplets, from phospholipids to triglycerides and sterol esters but the direction of lipid transfer by spartin and its cargos are unknown. May be implicated in endosomal trafficking, or microtubule dynamics, or both. Participates in cytokinesis. In Bos taurus (Bovine), this protein is Spartin.